A 389-amino-acid polypeptide reads, in one-letter code: Large envelope protein (389 aa).

Position 1 is an N-acetylmethionine (Met-1). A lipid anchor (N-myristoyl glycine; by host) is attached at Gly-2. Positions 2-108 (GTNLSVPNPL…PPLRDTHPQA (107 aa)) are pre-S1. The pre-S stretch occupies residues 2 to 163 (GTNLSVPNPL…LSTTGDPVPN (162 aa)). The Virion surface; in external conformation segment spans residues 2–170 (GTNLSVPNPL…VPNMENIASG (169 aa)). The Intravirion; in internal conformation portion of the chain corresponds to 2-242 (GTNLSVPNPL…PGYRWMCLRR (241 aa)). A pre-S2 region spans residues 109 to 163 (MQWNSTTFHQTLQDPRVRALYFPAGGSSSGTVNPVQNTASSISSILSTTGDPVPN). A helical membrane pass occupies residues 171–191 (LLGPLLVLQAGFFSLTKILTI). The Intravirion; in external conformation segment spans residues 192 to 242 (PLSLDSWWTSLNFLGETPVCLGQNSQSQISSHSPTCCPPICPGYRWMCLRR). Residues 243-263 (FIIFLCILLLCLIFLLVLLDY) traverse the membrane as a helical segment. At 264 to 337 (QGMLPVCPLI…WASVRFSWLS (74 aa)) the chain is on the virion surface side. N-linked (GlcNAc...) asparagine; by host glycosylation occurs at Asn-309. Residues 338–358 (LLVPFVQWFVGLSPTVWLSVI) traverse the membrane as a helical segment. The Intravirion segment spans residues 359–364 (WMMWFW). The helical transmembrane segment at 365-387 (GPSLYNILSPFMPLLPIFFCLWV) threads the bilayer. The Virion surface segment spans residues 388–389 (YI).

The protein belongs to the orthohepadnavirus major surface antigen family. In terms of assembly, interacts (via its myristoylated pre-S1 region) with the host SLC10A1/NTCP; this interaction is essential for viral entry. As to quaternary structure, in its internal form (Li-HBsAg), interacts with the capsid protein and with the isoform S. Interacts with host chaperone CANX. Associates with host chaperone CANX through its pre-S2 N glycan; this association may be essential for isoform M proper secretion. In terms of assembly, interacts with isoform L. Interacts with the antigens of satellite virus HDV (HDVAgs); this interaction is required for encapsidation of HDV genomic RNA. Isoform M is N-terminally acetylated by host at a ratio of 90%, and N-glycosylated by host at the pre-S2 region. Post-translationally, myristoylated; this modification is essential for its interaction with the host protein SLC10A1/NTCP.

The protein resides in the virion membrane. In terms of biological role, the large envelope protein exists in two topological conformations, one which is termed 'external' or Le-HBsAg and the other 'internal' or Li-HBsAg. In its external conformation the protein attaches the virus to cell receptors and thereby initiating infection. This interaction determines the species specificity and liver tropism. This attachment induces virion internalization predominantly through caveolin-mediated endocytosis. The large envelope protein also assures fusion between virion membrane and endosomal membrane. In its internal conformation the protein plays a role in virion morphogenesis and mediates the contact with the nucleocapsid like a matrix protein. The middle envelope protein plays an important role in the budding of the virion. It is involved in the induction of budding in a nucleocapsid independent way. In this process the majority of envelope proteins bud to form subviral lipoprotein particles of 22 nm of diameter that do not contain a nucleocapsid. In Hepatitis B virus genotype B2 (isolate Indonesia/pIDW420/1988) (HBV-B), this protein is Large envelope protein.